The following is a 653-amino-acid chain: Fusexin 1 (653 aa).

Positions 1–24 (MKRVGNCWKASVAAFFLLMFTAFA) are cleaved as a signal peptide. Over 25–559 (AADTTSVDTV…FENIWSGDAN (535 aa)) the chain is Extracellular. Intrachain disulfides connect Cys-129/Cys-167, Cys-398/Cys-441, Cys-468/Cys-487, and Cys-499/Cys-516. The segment at 155 to 160 (DYWTGS) is fusion loop. The helical transmembrane segment at 560 to 580 (ALNWLQVFVTFIAFLGGFALV) threads the bilayer. Residues 581-604 (GVKLGKIVDGLATEFIPVKDSHVR) lie on the Cytoplasmic side of the membrane. The next 2 helical transmembrane spans lie at 605–625 (LVIGLLGGGMIATAVYQLVTD) and 626–646 (PLGLLVTVLGLVVMGYLYLSA). Residues 647–653 (SAPEINL) lie on the Cytoplasmic side of the membrane.

It belongs to the HAP2/GCS1 family. Fusexin 1 subfamily. Homotrimer stabilized by interdomain contacts and numerous Ca(2+) and Na(+) ions.

The protein resides in the cell surface. It localises to the cell membrane. Functionally, exhibits fusogenic activity. Mediates cell-cell fusion in mammalian cells (bilateral fusion). This Haloplanus natans (strain DSM 17983 / JCM 14081 / CGMCC 1.8972 / RE-101) protein is Fusexin 1.